The following is a 247-amino-acid chain: MQAQQSTVDPSEIAKFEAMAAEWWDPNGKFKPLHMLNPCRLDYITSQIAGEFDRDLKTDAPFAGLRILDIGCGGGLLSEPMARLGAEVVGADAAEGNLPVARIHAEQSGLEIDYRHTTAEAMAEAGEQFDVVLNMEVVEHVADPLSYLTATQQLLKSGGLQICSTINRNPKSYAMAIFGAEVVMRWLPRGTHEWSKFITPDELFALLEQAGLNPVDRKGFVFNPILWKWSISDRDLSVNYVTASTKS.

S-adenosyl-L-methionine-binding residues include Arg40, Gly71, Asp92, and Met135.

Belongs to the methyltransferase superfamily. UbiG/COQ3 family.

It carries out the reaction a 3-demethylubiquinol + S-adenosyl-L-methionine = a ubiquinol + S-adenosyl-L-homocysteine + H(+). The catalysed reaction is a 3-(all-trans-polyprenyl)benzene-1,2-diol + S-adenosyl-L-methionine = a 2-methoxy-6-(all-trans-polyprenyl)phenol + S-adenosyl-L-homocysteine + H(+). Its pathway is cofactor biosynthesis; ubiquinone biosynthesis. Its function is as follows. O-methyltransferase that catalyzes the 2 O-methylation steps in the ubiquinone biosynthetic pathway. This Ruegeria sp. (strain TM1040) (Silicibacter sp.) protein is Ubiquinone biosynthesis O-methyltransferase.